Reading from the N-terminus, the 67-residue chain is Conotoxin ArMLKM-01 (67 aa).

An N-terminal signal peptide occupies residues 1-24 (MLKMEVVLFTFLVLFPLSTLQLET). Residues 25 to 51 (DQPVERYVENKQDLNPDESRNFMLPIV) constitute a propeptide that is removed on maturation. 3 disulfide bridges follow: cysteine 54–cysteine 65, cysteine 55–cysteine 63, and cysteine 58–cysteine 66.

The protein belongs to the conotoxin M superfamily. Expressed by the venom duct.

The protein localises to the secreted. This chain is Conotoxin ArMLKM-01, found in Conus arenatus (Sand-dusted cone).